Consider the following 198-residue polypeptide: Nucleoid occlusion factor SlmA (198 aa).

An HTH tetR-type domain is found at 9–70; sequence RNRREEILQA…SLIEFIEDSL (62 aa). The segment at residues 33 to 52 is a DNA-binding region (H-T-H motif); sequence TTAKLAANVGVSEAALYRHF. Residues 117 to 144 adopt a coiled-coil conformation; sequence EQDRLQGRINQLFERIEAQLRQVLKERK.

It belongs to the nucleoid occlusion factor SlmA family. As to quaternary structure, homodimer. Interacts with FtsZ.

The protein localises to the cytoplasm. Its subcellular location is the nucleoid. Required for nucleoid occlusion (NO) phenomenon, which prevents Z-ring formation and cell division over the nucleoid. Acts as a DNA-associated cell division inhibitor that binds simultaneously chromosomal DNA and FtsZ, and disrupts the assembly of FtsZ polymers. SlmA-DNA-binding sequences (SBS) are dispersed on non-Ter regions of the chromosome, preventing FtsZ polymerization at these regions. In Serratia proteamaculans (strain 568), this protein is Nucleoid occlusion factor SlmA.